The following is a 4699-amino-acid chain: MFTMKIKKYVTPVKRKAFTILQWISLLCSLWLIPTVQSKADEKHTATLEYRLENQLQDLYRFSHSVYNVTIPENSLGKTYAKGVLHERLAGLRVGLNAEVKYRIISGDKEKLFKAEEKLVGDFAFLAIRTRTNNVVLNREKTEEYVIRVKAHVHLHDRNVSSYETEANIHIKVLDRNDLSPLFYPTQYTVVIPEDTPKYQSILKVTADDADLGINGEIYYSLLMDSEYFAIHPTTGEITLLQQLQYAENSHFELTVVAYDRGSWVNHQNHQASKTKVSISVKQVNFYAPEIFTKTFSSVTPTSNPLIYGIVRVNDKDTGINGNIGRLEIVDGNPDGTFLLKAAETKDEYYIELNQFAHLNQQHFIYNLTLLAEDLGTPRRFAYKSVPIQIKPESKNIPIFTQEIYEVSIPETAPINMPVIRLKVSDPDLGKNALVYLEIVGGNEGDEFRINPDSGMLYTAKQLDAEKKSSYTLTVSAIDQANVGSRKQSSAKVKISVQDMNDNDPIFENVNKVISINENNLAGSFVVKLTAKDRDSGENSYISYSIANLNAVPFEIDHFSGIVKTTSLLDFETMKRNYELIIRASDWGLPYRRQTEIKLSIVVKDINDNRPQFERVNCYGKVTKSAPMGTEVFVTSAIDFDAGDIISYRLSDGNEDGCFNLDPTSGSLSISCDLKKTTLTNRILKVSATDGTHFSDDLIINVHLMPEDLGGDSSILHGFGSFECRETGVARRLAETLSLAEKNNVKSASPSVFSDLSLTPSRYGQNVHRPEFVNFPQELSINESVQLGETVAWIEAKDRDLGYNGKLVFAISDGDYDSVFRIDPDRGELQIIGYLDRERQNEYVLNITVYDLGNPTKSTSKMLPITILDVNDNRPVIQKTLATFRLTESARIGTVVHCLHATDADSGINAQVTYALSVECSDFTVNATTGCLRLNKPLDREKQDNYALHITAKDGGSPVLSSEALVYVLVDDVNDNAPVFGVQEYIFKVREDLPRGTVLAVIEAVDEDIGPNAEIQFSLKEETQDEELFRIDKHTGAIRTQGYLDYENKQVHNLIVSAIDGGDPSLTSDMSIVIMIIDVNENRFAPEFDDFVYEGKVKENKPKGTFVMNVTARDMDTVDLNSKITYSITGGDGLGIFAVNDQGSITSLSQLDAETKNFYWLTLCAQDCAIVPLSNCVEVYIQVENENDNIPLTDKPVYYVNVTEASVENVEIITLKAFDPDIDPTQTITYNIVSGNLVGYFEIDSKTGVIKTTERKLDRENQAEHILEVAISDNGSPVLSSTSRIVVSVLDINDNSPEFDQRVYKVQVPSSATVNQSIFQVHAIDSDSGENGRITYSIKSGKGKNKFRIDSQRGHIHIAKPLDSDNEFEIHIKAEDNGIPKKSQTARVNIVVVPVNPNSQNAPLIVRKTSENVVDLTENDKPGFLVTQILAVDDDNDQLWYNISNGNDDNTFYIGQDNGNILLSKYLDYETQQSYNLTISVTDGTFTAFTNLLVQVIDINDNPPQFAKDVYHVNISENIEEESVIMQLHATDRDEDKKLFYHLHATQDPSSLALFRIDSISGNVIVTQRLDFEKTAQHILIVFVKDQGAPGKRNYAKIIVNVHDHNDHHPEFTAKIIQSKVPESAAIGSKLAEVRAIDRDSGHNAEIQYSIITGNVGSVFEIDPTFGIITLAGNLNINKIQEYMLQVKAVDLGNPPLSSQIPVHIIVTMSENDPPKFPTNNIAIEIFENLPIGTFVTQVTARSSSSIFFNIISGNINESFRINPSTGVIVINGNIDYESIKVFNLTVKGTNMAAESSCQNIIIHILDANDNIPYFVQNEYVGALPESAAIGSYVLKVHDSSKDHLTLQVKDADVGVNGMVEYHIVDDLAKNFFKIDSTTGAIELLRQLDYETNAGYTFDVTVSDMGKPKLHSTTTAHVTIRVINVNDCPPVFNERELNVTLFLPTFENVFVRQVSAKDADNDTLRFDIVDGNTNECFQIEKYTGIITTRNFEILNNENDRDYALHVRASDGIFSAILIVKIKVLSAIDSNFAFQRESYRFSAFENNTKVATIGLVNVIGNTLDENVEYRILNPTQLFDIGISSGALKTTGVIFDREVKDLYRLFVEAKSMLYDGMNSNVRRAVTSIDISVLDVNDNCPLFVNMPYYATVSIDDPKGTIIMQVKAIDLDSAENGEVRYELKKGNGELFKLDRKSGELSIKQHVEGHNRNYELTVAAYDGAITPCSSEAPLQVKVIDRSMPVFEKQFYTVSVKEDVEMYSALSVSIEAESPLGRSLIYTISSESQSFEIDYNTGSIFVVNELDYEKISSHDVSIRATDSLSGVYAEVVLSVSIMDVNDCYPEIESDIYNLTIPENASFGTQILKINATDNDSGANAKLSYYIESINGQNNSELFYIDVTDGNLYLKTPLDYEQIKYHHIVVNVKDHGSPSLSSRSNVFITVKDLNDNAPCFVEPSYFTKVSVAAVRGQFVALPKAYDKDISDTDSLEYKIVYGNELQTYSIDKLTGVISLQNMLNFTDKSSTVLNISVSDGVHTAYARLKISLLPENVYSPLFDQSTYEAQVPENLLHGHNIITVKASDGDFGTYANLYYEIVSEEMKKIFLIDQTTGVITSKVTFDREKKDEYVVLLKVSDGGGKFGFASLKVIVVDVNDNVPYFLLKEYKMVVSTTVEANQTILTVKAKDDDIVDNGSVHFQIVQKSNDKAVKDVIEINEKTGDIVFKSKAESYGVNSYQFFVRASDRGEPQFHSEVPVSIEIIETDANIPTFEKSSVLLKIIESTPPGTVLTKLHMIGNYTFKFSIAADQDHFMISDSGELILQQTLDREQQESHNLIVVAETSTVPVFFAYADVLIDVRDENDNYPKFDNTFYSASVAENSEKVISLVKVSATDADTGPNGDIRYYLESDTENIQNIFDIDIYSGWITLLTSLDREVQSEYNFKVIAADNGHPKHDAKVPVTIKIVDYNDNAPVFKLPIEGLSVFENALPGTVLINLLLIDPDIEKQEMDFFIVSGDKQAQFQIGKSGELFIAKPLDREQLMFYNLSIIATDGKFTAKANVEIDVKDINDNTPYCLKPRYHISTNESISIGTTLVEVKAIDFDFQSKLRFYLSGKGADDFSIGKESGILKVASALDRETTPKYKLVAHVQDGKDFTQECFSEIIITVNDINDNMPIFSMAQYRVSVPEDAQLNTLITKVHAMDKDFGVNRQIKYSLMGENHDYFKISKSTGIIRLHKSLDRETISLFNLTVKAEDCGVPKLHSIATVAVNILDINDNPPEFSMRQYSCKILENATHGTEVCKVYATSIDIGVNADIHYFIMSGNEQGKFKMDSTTGDLVLNATLDYEMSKFYFLTIQAIDGGTPPLSNNAYVNISILDINDNSPTFLQNLYRINVNEDIFVGSKILDVKATDEDSDVNGLVTYNIERGDNIGQFSIDPKNGTISVSRPLDRETISHYTLEIQACDQGDPQRCNSVPININILDTNDNAPIFSSSNYSVVLQENRLLGYVFLTFKISDADETPNTTPYTFDIRSGNEGGLFRLEQDGSLRTASRFNHNLQDEFVIQVRVFDNGTPPLYSDAWVVVKIIEESQYPPIVTPLEVTINSFEDDFSGAFIGKVHASDQDKYDELNFSLVSGPDDMYQSSKLFNISNNTGKIYAISNLDIGLYKLNVSVSDGKFHVFSIVKINVELVTNDMLKESVVIRFRRISASEFLLSHRKTFMRSIRNIMRCRQKDVILITLQSDYQKASQHAVGNRRARSIDSDLNVVFAVRKQQIIPDSDEFFTSDEIRQTLIDKKNEIENETNLVVEDVLPSTCQSNKNDCVHGECKQILQILKNNVTTTFTDVISFAAPSYIPVNTCVCRPGFDGKHCKETVNACSTDPCSPQRICMPSGSALGYQCVCPKGFSGTYCERKSSKCSNESCDMGLFTAVSFGGKSYAHYKINKVKAKFTLENGFSYSLQIRTVQQTGTLLYASGKVDYNILEIINGAVQYRFDLGSGEGVISVSSINISDGEWHQISLERSLNSAKVMVDNKHVSHGSAPGVNGILNIQSNDIFVGAEVRPHPSIIGYEDIQRGFIGCMANIKIAKESLPLYISGGSTIAALKRFTNVEFKCDPSNVLVRLGICGSQPCANSGICKELDTDVFECACQPRYSGKHCEIDLDPCSSGPCLFGGRCDYHGPNNYSCTCPIHLSGKRCEYGKFCTPNPCKNGGICEEGDGISHCMCRGYTGPTCEIDVDECENQPCGNGATCINEPGSFRCICPSYLTGASCGDPLYSNSISTKLKNFSIEHISGIISGVAVVLVIISCVLCCVVLKRSSSSKRRNRLEKDKNKSSYKEANLNSLVDKDNYCKPNVKLSNLEVNQRPISYTAVPNDNLVLSNRNFVNNLDILRSYGSAGDELENVPFEYQKVNRNKQHVNINSCHSTDADNAYKQEWCEQMHLRTFSENKLNNELKRDFGPSVSRFSTGKLIQVEMPNVCHSSSANFVDYSALANGQYHWDCSDWVRKSHNPLPDITEVPGAEIADSSSLHSNDSNESKSKKAFFVHREDGDVDPTRDIAALNEDIGSEYLDSEAESCLEPFMLPRSSNQPLSRLSSFNNIENEDYKSNTVPLPSKVSHSCKVYLRHPDSYLPTMHFPSETDGESSMTEGPISRMEIKTRRTISENSEEAYLFPCTVGEIGSNSNISVRLCEIEDSELEEFLPQQQTNN.

An N-terminal signal peptide occupies residues 1–38 (MFTMKIKKYVTPVKRKAFTILQWISLLCSLWLIPTVQS). Residues 39-4285 (KADEKHTATL…KNFSIEHISG (4247 aa)) lie on the Extracellular side of the membrane. 34 consecutive Cadherin domains span residues 63–183 (SHSV…SPLF), 184–291 (YPTQ…APEI), 288–400 (APEI…IPIF), 401–507 (TQEI…DPIF), 508–613 (ENVN…RPQF), 614–716 (ERVN…SSIL), 773–877 (VNFP…RPVI), 878–980 (QKTL…APVF), 981–1088 (GVQE…APEF), 1089–1198 (DDFV…KPVY), 1194–1299 (DKPV…SPEF), 1300–1405 (DQRV…APLI), 1408–1506 (KTSE…PPQF), 1507–1612 (AKDV…HPEF), 1613–1717 (TAKI…PPKF), 1718–1815 (PTNN…IPYF), 1816–1932 (VQNE…PPVF), 1933–2033 (NERE…NFAF), 2034–2140 (QRES…CPLF), 2141–2241 (VNMP…MPVF), 2242–2341 (EKQF…YPEI), 2342–2449 (ESDI…APCF), 2450–2551 (VEPS…SPLF), 2552–2654 (DQST…VPYF), 2655–2763 (LLKE…IPTF), 2764–2860 (EKSS…YPKF), 2861–2967 (DNTF…APVF), 2968–3072 (KLPI…KPRY), 3068–3169 (LKPR…MPIF), 3170–3273 (SMAQ…PPEF), 3274–3378 (SMRQ…SPTF), 3379–3483 (LQNL…APIF), 3484–3588 (SSSN…PPIV), and 3589–3696 (TPLE…VIRF). Asn68 and Asn159 each carry an N-linked (GlcNAc...) asparagine glycan. Asn367 carries N-linked (GlcNAc...) asparagine glycosylation. Asn782, Asn846, and Asn926 each carry an N-linked (GlcNAc...) asparagine glycan. Asn1109, Asn1201, Asn1315, Asn1442, Asn1476, and Asn1514 each carry an N-linked (GlcNAc...) asparagine glycan. Cystine bridges form between Cys3807/Cys3819, Cys3814/Cys3851, Cys3853/Cys3862, Cys3869/Cys3880, Cys3874/Cys3891, Cys3893/Cys3902, Cys4071/Cys4105, Cys4117/Cys4128, Cys4122/Cys4138, Cys4140/Cys4149, Cys4156/Cys4167, Cys4161/Cys4177, Cys4179/Cys4188, Cys4194/Cys4205, Cys4199/Cys4214, Cys4216/Cys4224, Cys4231/Cys4242, Cys4236/Cys4251, and Cys4253/Cys4262. One can recognise an EGF-like 1 domain in the interval 3865–3903 (TVNACSTDPCSPQRICMPSGSALGYQCVCPKGFSGTYCE). Residues 3921–4105 (AVSFGGKSYA…KRFTNVEFKC (185 aa)) form the Laminin G-like domain. 4 consecutive EGF-like domains span residues 4113-4150 (RLGICGSQPCANSGICKELDTDVFECACQPRYSGKHCE), 4152-4189 (DLDPCSSGPCLFGGRCDYHGPNNYSCTCPIHLSGKRCE), 4190-4225 (YGKFCTPNPCKNGGICEEGDGISHCMCRGYTGPTCE), and 4227-4263 (DVDECENQPCGNGATCINEPGSFRCICPSYLTGASCG). A helical membrane pass occupies residues 4286-4306 (IISGVAVVLVIISCVLCCVVL). Residues 4307–4699 (KRSSSSKRRN…EFLPQQQTNN (393 aa)) lie on the Cytoplasmic side of the membrane.

Localizes where basal actin filaments terminate.

It is found in the cell membrane. Required for the planar polarity of actin filament orientation at the basal side of ovarian follicle cells. Required for proper egg chamber shape and elongation of the egg chamber during oogenesis. Required for the correct planar polarization of Rab10 within the basal follicle cell epithelium and is therefore indirectly involved in the Rab10-dependent remodeling of the basal membrane during egg chamber elongation. This chain is Fat-like cadherin-related tumor suppressor homolog (kug), found in Drosophila melanogaster (Fruit fly).